The following is a 1386-amino-acid chain: Lysophospholipase NTE1 (1386 aa).

The Cytoplasmic portion of the chain corresponds to 1-19 (MGPEFEDSIPLVHSDNRTT). Residues 20-40 (TIYSVYIIISDIFSFVQWLLF) form a helical membrane-spanning segment. Residues 41–65 (KVLNLIIIDSPAFVLRLLSKNFEIN) are Lumenal-facing. A helical membrane pass occupies residues 66 to 86 (LHLSSILATLIGVSVVTYLVI). At 87–1386 (RYKFLTGYSH…KKILYRRNSI (1300 aa)) the chain is on the cytoplasmic side. The interval 394-416 (EAEAENLPKKLKHHHRNQLQRTT) is disordered. Residues 402–411 (KKLKHHHRNQ) show a composition bias toward basic residues. A nucleoside 3',5'-cyclic phosphate contacts are provided by residues 577–701 (KRLL…LKNL) and 697–821 (KLKN…VASK). Positions 1081 to 1245 (LVLGGGGSRG…LDNLPVNEMK (165 aa)) constitute a PNPLA domain. The GXGXXG motif lies at 1085–1090 (GGGSRG). Residues 1112 to 1116 (GTSIG) carry the GXSXG motif. S1114 functions as the Nucleophile in the catalytic mechanism. The active-site Proton acceptor is the D1232. The DGA/G signature appears at 1232 to 1234 (DGG).

It belongs to the NTE family.

The protein resides in the endoplasmic reticulum membrane. The enzyme catalyses a 1-acyl-sn-glycero-3-phosphocholine + H2O = sn-glycerol 3-phosphocholine + a fatty acid + H(+). Inhibited by organophosphorus esters. Intracellular phospholipase B that catalyzes the double deacylation of phosphatidylcholine (PC) to glycerophosphocholine (GroPCho). Plays an important role in membrane lipid homeostasis. Responsible for the rapid PC turnover in response to inositol, elevated temperatures, or when choline is present in the growth medium. The sequence is that of Lysophospholipase NTE1 (NTE1) from Candida albicans (strain SC5314 / ATCC MYA-2876) (Yeast).